The following is a 481-amino-acid chain: Ras-GEF domain-containing family member 1A (481 aa).

The region spanning 41 to 170 is the N-terminal Ras-GEF domain; that stretch reads QDGHLISGSL…AIAQMTQSLL (130 aa). The Ras-GEF domain occupies 214–461; that stretch reads DPLVLAQQLT…FVASFESEGP (248 aa).

Detected in brain and spinal cord. Highly expressed in a number of intrahepatic cholangiocarcinoma tissue biopsies.

Guanine nucleotide exchange factor (GEF) with specificity for RAP2A, KRAS, HRAS, and NRAS (in vitro). Plays a role in cell migration. The chain is Ras-GEF domain-containing family member 1A (RASGEF1A) from Homo sapiens (Human).